We begin with the raw amino-acid sequence, 543 residues long: Chaperonin GroEL 2 (543 aa).

ATP is bound by residues 29-32 (TLGP), 86-90 (DGTTT), G413, 479-481 (NAA), and D495.

Belongs to the chaperonin (HSP60) family. Forms a cylinder of 14 subunits composed of two heptameric rings stacked back-to-back. Interacts with the co-chaperonin GroES.

The protein resides in the cytoplasm. It catalyses the reaction ATP + H2O + a folded polypeptide = ADP + phosphate + an unfolded polypeptide.. In terms of biological role, together with its co-chaperonin GroES, plays an essential role in assisting protein folding. The GroEL-GroES system forms a nano-cage that allows encapsulation of the non-native substrate proteins and provides a physical environment optimized to promote and accelerate protein folding. This chain is Chaperonin GroEL 2, found in Synechococcus sp. (strain CC9311).